The sequence spans 362 residues: Aminomethyltransferase (362 aa).

The protein belongs to the GcvT family. The glycine cleavage system is composed of four proteins: P, T, L and H.

The catalysed reaction is N(6)-[(R)-S(8)-aminomethyldihydrolipoyl]-L-lysyl-[protein] + (6S)-5,6,7,8-tetrahydrofolate = N(6)-[(R)-dihydrolipoyl]-L-lysyl-[protein] + (6R)-5,10-methylene-5,6,7,8-tetrahydrofolate + NH4(+). Its function is as follows. The glycine cleavage system catalyzes the degradation of glycine. The protein is Aminomethyltransferase of Chloroherpeton thalassium (strain ATCC 35110 / GB-78).